The following is an 85-amino-acid chain: Progonadoliberin-2 (85 aa).

Positions 1–23 (MCVSRLVLLFGLLLCVGAQLSNA) are cleaved as a signal peptide. Pyrrolidone carboxylic acid is present on Q24. G33 is modified (glycine amide).

The protein belongs to the GnRH family.

It localises to the secreted. Stimulates the secretion of gonadotropins. The polypeptide is Progonadoliberin-2 (gnrh2) (Dicentrarchus labrax (European seabass)).